Here is a 236-residue protein sequence, read N- to C-terminus: UPF0257 lipoprotein YnfC (236 aa).

An N-terminal signal peptide occupies residues 1 to 16 (MKKPLLLTLLCMILAG). Cysteine 17 carries the N-palmitoyl cysteine lipid modification. Residue cysteine 17 is the site of S-diacylglycerol cysteine attachment.

It belongs to the UPF0257 family.

Its subcellular location is the cell membrane. The chain is UPF0257 lipoprotein YnfC from Salmonella paratyphi C (strain RKS4594).